Reading from the N-terminus, the 926-residue chain is Chitin synthase-like protein 2 (926 aa).

The disordered stretch occupies residues 1–56 (MSFQNPSYINAKHRSFLQPKDTQDSQDLRNWVSHSSVDEETAYSSSTLSSSSSKSF). Residues 44–55 (SSSTLSSSSSKS) are compositionally biased toward low complexity. Transmembrane regions (helical) follow at residues 564–584 (INSS…LWTT), 599–619 (LVFA…FLAF), 641–661 (LFLV…MLAM), 671–691 (LLFI…FCVF), 721–741 (LLIL…FFIF), 853–873 (VLVW…VFDG), and 885–905 (IFWS…TFIA).

This sequence belongs to the chitin synthase family.

The protein resides in the membrane. Functionally, plays a role in septum formation. Has no chitin synthase activity. The polypeptide is Chitin synthase-like protein 2 (chs2) (Schizosaccharomyces pombe (strain 972 / ATCC 24843) (Fission yeast)).